A 357-amino-acid chain; its full sequence is Ubiquitin carboxyl-terminal hydrolase 2 (357 aa).

The USP domain occupies 19–351 (TGLRNLGNTC…DAYLLFYELA (333 aa)). C28 functions as the Nucleophile in the catalytic mechanism. The Zn(2+) site is built by C177, C180, C228, and C231. Catalysis depends on H309, which acts as the Proton acceptor.

This sequence belongs to the peptidase C19 family. USP2 subfamily. Homooligomer.

It is found in the cytoplasm. The protein resides in the perinuclear region. It carries out the reaction Thiol-dependent hydrolysis of ester, thioester, amide, peptide and isopeptide bonds formed by the C-terminal Gly of ubiquitin (a 76-residue protein attached to proteins as an intracellular targeting signal).. In terms of biological role, hydrolase that deubiquitinates polyubiquitinated target proteins such as MDM2, MDM4 and CCND1. Possesses both ubiquitin-specific peptidase and isopeptidase activities. May play a role in the regulation of the circadian clock. The sequence is that of Ubiquitin carboxyl-terminal hydrolase 2 (USP2) from Gallus gallus (Chicken).